The primary structure comprises 109 residues: U4-lycotoxin-Ls1a (109 aa).

The signal sequence occupies residues 1–22 (MKVLVLFSVLFLTLFSYSSTEA). Residues 23–44 (IDELDSDAEEDMLSLMANEQVR) constitute a propeptide that is removed on maturation. The tract at residues 45 to 88 (AKACTPRLHDCSHDRHSCCRGELFKDVCYCFYPEGEDKTEVCSC) is knottin domain. Cystine bridges form between cysteine 48–cysteine 63, cysteine 55–cysteine 72, cysteine 62–cysteine 88, and cysteine 74–cysteine 86. The segment at 89 to 108 (QQPKSHKYIEKVVDKAKTVV) is linear cationic cytotoxin domain.

This sequence belongs to the neurotoxin 19 (CSTX) family. 05 (U4-Lctx) subfamily. In terms of tissue distribution, expressed by the venom gland.

The protein localises to the secreted. Functionally, enhances the high-affinity desensitization of human P2RX3 purinoceptors. This Lycosa singoriensis (Wolf spider) protein is U4-lycotoxin-Ls1a.